Consider the following 639-residue polypeptide: Synaptotagmin-16 (639 aa).

Positions 95 to 119 (NSDLQDSVQTASPTLGQQAEDSSSV) are enriched in polar residues. Residues 95-191 (NSDLQDSVQT…SSESDEDVTK (97 aa)) are disordered. The segment covering 121-134 (PPWPSKIPGAPKPQ) has biased composition (pro residues). Residues 142–151 (EEDHHSERQR) are compositionally biased toward basic and acidic residues. Over residues 174–187 (GDDEEPSTSSESDE) the composition is skewed to acidic residues. In terms of domain architecture, C2 1 spans 344–463 (KCGDLDVIFE…HPEGEMKVTL (120 aa)). The tract at residues 470–496 (NLSSGESPLSPSVVSHSDSASSTQSLS) is disordered. Residues 476–496 (SPLSPSVVSHSDSASSTQSLS) are compositionally biased toward low complexity. The C2 2 domain occupies 499–634 (GVPELLVGLS…SKGQQTCRWH (136 aa)).

It belongs to the synaptotagmin family. In terms of assembly, homodimer. Can also form heterodimers. In terms of tissue distribution, highly expressed in heart and testis. Moderately expressed in kidney.

Functionally, may be involved in the trafficking and exocytosis of secretory vesicles in non-neuronal tissues. Is Ca(2+)-independent. The polypeptide is Synaptotagmin-16 (Syt16) (Mus musculus (Mouse)).